The following is a 355-amino-acid chain: Putative testis-specific Y-encoded-like protein 3 (355 aa).

The segment at 1-131 is disordered; the sequence is MADKRAGTPE…GEEKQEVAAE (131 aa). Positions 93-128 are enriched in basic and acidic residues; the sequence is ASEKAEDANKEEGAIFKKEPAEEVEKQQEGEEKQEV.

Belongs to the nucleosome assembly protein (NAP) family.

This is Putative testis-specific Y-encoded-like protein 3 (TSPY26P) from Homo sapiens (Human).